The chain runs to 152 residues: 6,7-dimethyl-8-ribityllumazine synthase (152 aa).

5-amino-6-(D-ribitylamino)uracil-binding positions include Phe-22, 56–58, and 79–81; these read AFE and AVI. 84-85 lines the (2S)-2-hydroxy-3-oxobutyl phosphate pocket; that stretch reads AT. His-87 serves as the catalytic Proton donor. Position 112 (Phe-112) interacts with 5-amino-6-(D-ribitylamino)uracil. (2S)-2-hydroxy-3-oxobutyl phosphate is bound at residue Arg-126.

The protein belongs to the DMRL synthase family.

The enzyme catalyses (2S)-2-hydroxy-3-oxobutyl phosphate + 5-amino-6-(D-ribitylamino)uracil = 6,7-dimethyl-8-(1-D-ribityl)lumazine + phosphate + 2 H2O + H(+). Its pathway is cofactor biosynthesis; riboflavin biosynthesis; riboflavin from 2-hydroxy-3-oxobutyl phosphate and 5-amino-6-(D-ribitylamino)uracil: step 1/2. Its function is as follows. Catalyzes the formation of 6,7-dimethyl-8-ribityllumazine by condensation of 5-amino-6-(D-ribitylamino)uracil with 3,4-dihydroxy-2-butanone 4-phosphate. This is the penultimate step in the biosynthesis of riboflavin. In Carboxydothermus hydrogenoformans (strain ATCC BAA-161 / DSM 6008 / Z-2901), this protein is 6,7-dimethyl-8-ribityllumazine synthase.